A 461-amino-acid chain; its full sequence is Nuclear distribution protein PAC1 (461 aa).

Residues 64–93 (NSIIRLHRKILDLEQKCQQLTEELEAVPTE) adopt a coiled-coil conformation. WD repeat units lie at residues 118–157 (DVGA…MPLH), 161–203 (AHMK…AFQL), 209–252 (SHEH…KSFQ), 254–292 (HNQW…SMAV), 318–362 (DDQV…FIPH), 382–421 (GHTS…KVWP), and 423–461 (ASHG…VFMR).

Belongs to the WD repeat LIS1/nudF family. Self-associates. Interacts with NDL1 and dynein.

The protein localises to the cytoplasm. It is found in the cytoskeleton. It localises to the spindle pole. In terms of biological role, positively regulates the activity of the minus-end directed microtubule motor protein dynein. Plays a central role in positioning the mitotic spindle at the bud neck during cell division. Targets cytoplasmic dynein to microtubule plus ends, thereby promoting dynein-mediated microtubule sliding along the bud cortex and consequently the movement of the mitotic spindle to the bud neck. The polypeptide is Nuclear distribution protein PAC1 (Eremothecium gossypii (strain ATCC 10895 / CBS 109.51 / FGSC 9923 / NRRL Y-1056) (Yeast)).